A 165-amino-acid chain; its full sequence is MSSAPTTPPSVDKVDGFSRKSVRKARQKRSQSSSQFRSQGKPIELTPLPLLKDVPSSEQPELFLKKLQQCCVIFDFMDTLSDLKMKEYKRSTLNELVDYITISRGCLTEQTYPEVVRMVSCNIFRTLPPSDSNEFDPEEDEPTLEASWPHLQLVYEFFIRFLESQ.

Residues 1 to 41 (MSSAPTTPPSVDKVDGFSRKSVRKARQKRSQSSSQFRSQGK) are disordered. S2 carries the post-translational modification N-acetylserine. A Phosphothreonine modification is found at T7. Over residues 20–29 (KSVRKARQKR) the composition is skewed to basic residues. Residues S30, S32, and S34 each carry the phosphoserine modification. Low complexity predominate over residues 30–41 (SQSSSQFRSQGK).

It belongs to the phosphatase 2A regulatory subunit B56 family. As to quaternary structure, PP2A consists of a common heterodimeric core enzyme, composed of a 36 kDa catalytic subunit (subunit C) and a 65 kDa constant regulatory subunit (PR65 or subunit A), that associates with a variety of regulatory subunits. Proteins that associate with the core dimer include three families of regulatory subunits B (the R2/B/PR55/B55, R3/B''/PR72/PR130/PR59 and R5/B'/B56 families), the 48 kDa variable regulatory subunit, viral proteins, and cell signaling molecules. Interacts with SGO1. Found in a complex with at least ARL2, PPP2CB; PPP2R1A, PPP2R2A, PPP2R5E and TBCD. Highly expressed in testis, lung and brain.

It is found in the cytoplasm. Its function is as follows. The B regulatory subunit might modulate substrate selectivity and catalytic activity, and might also direct the localization of the catalytic enzyme to a particular subcellular compartment. The sequence is that of Serine/threonine-protein phosphatase 2A 56 kDa regulatory subunit epsilon isoform (PPP2R5E) from Oryctolagus cuniculus (Rabbit).